The sequence spans 44 residues: MRDFKTYLSVAPVLSTLSLGFLTGFLIEMNRFFPDALTFPFFSF.

The helical transmembrane segment at 7-27 (YLSVAPVLSTLSLGFLTGFLI) threads the bilayer.

Belongs to the PsaJ family.

It localises to the plastid membrane. Its function is as follows. May help in the organization of the PsaE and PsaF subunits. The polypeptide is Photosystem I reaction center subunit IX (Cuscuta gronovii (Common dodder)).